A 707-amino-acid polypeptide reads, in one-letter code: Polyribonucleotide nucleotidyltransferase (707 aa).

2 residues coordinate Mg(2+): Asp-485 and Asp-491. The 60-residue stretch at 552 to 611 (PRIHTMKINSDKIKDVIGKGGAVIRALTEETGTTIEIEDDGTIKIAATEGAAAKEAIRRI) folds into the KH domain. Residues 621–689 (GRIYTGKVMR…RQGRIRLSMK (69 aa)) enclose the S1 motif domain.

Belongs to the polyribonucleotide nucleotidyltransferase family. In terms of assembly, component of the RNA degradosome, which is a multiprotein complex involved in RNA processing and mRNA degradation. Mg(2+) serves as cofactor.

It is found in the cytoplasm. It carries out the reaction RNA(n+1) + phosphate = RNA(n) + a ribonucleoside 5'-diphosphate. In terms of biological role, involved in mRNA degradation. Catalyzes the phosphorolysis of single-stranded polyribonucleotides processively in the 3'- to 5'-direction. This is Polyribonucleotide nucleotidyltransferase from Photobacterium profundum (strain SS9).